The sequence spans 541 residues: NAD(P)H-quinone oxidoreductase subunit 2 A, chloroplastic (541 aa).

14 helical membrane passes run 24 to 44 (LLLFDGSLIFPECILIFGLIL), 57 to 77 (IPWLYFIPSTSLVMSITALLF), 99 to 119 (IFQFLILLCSTLCIPLSVEYI), 124 to 144 (MAITEFLLFVLTATLGGMFLC), 149 to 169 (FITIFVAPECFSLCSYLLSGY), 183 to 203 (YLLMGGASSSILVHGFSWLYG), 227 to 247 (PGISIALIFITVGIGFKLSPA), 289 to 309 (ILSPTPVVAFLSVTSKVAASA), 326 to 346 (WHLLLEILAILSMILGNLIAI), 354 to 374 (MLAYSSIGQIGYVIIGIIVGD), 385 to 405 (YMLFYISMNLGTFACIVLFGL), 426 to 446 (ALSLALCLLSLGGLPPLAGFF), 449 to 469 (LYLFWCGWQAGLYFLVLIGLL), and 515 to 535 (MIVCVIASTIPGISMNPIIAI).

Belongs to the complex I subunit 2 family. In terms of assembly, NDH is composed of at least 16 different subunits, 5 of which are encoded in the nucleus.

The protein localises to the plastid. It localises to the chloroplast thylakoid membrane. The catalysed reaction is a plastoquinone + NADH + (n+1) H(+)(in) = a plastoquinol + NAD(+) + n H(+)(out). It catalyses the reaction a plastoquinone + NADPH + (n+1) H(+)(in) = a plastoquinol + NADP(+) + n H(+)(out). NDH shuttles electrons from NAD(P)H:plastoquinone, via FMN and iron-sulfur (Fe-S) centers, to quinones in the photosynthetic chain and possibly in a chloroplast respiratory chain. The immediate electron acceptor for the enzyme in this species is believed to be plastoquinone. Couples the redox reaction to proton translocation, and thus conserves the redox energy in a proton gradient. The polypeptide is NAD(P)H-quinone oxidoreductase subunit 2 A, chloroplastic (Coffea arabica (Arabian coffee)).